A 161-amino-acid chain; its full sequence is Protein-export protein SecB (161 aa).

This sequence belongs to the SecB family. In terms of assembly, homotetramer, a dimer of dimers. One homotetramer interacts with 1 SecA dimer.

The protein localises to the cytoplasm. Its function is as follows. One of the proteins required for the normal export of preproteins out of the cell cytoplasm. It is a molecular chaperone that binds to a subset of precursor proteins, maintaining them in a translocation-competent state. It also specifically binds to its receptor SecA. In Afipia carboxidovorans (strain ATCC 49405 / DSM 1227 / KCTC 32145 / OM5) (Oligotropha carboxidovorans), this protein is Protein-export protein SecB.